Reading from the N-terminus, the 265-residue chain is Polyglutamine-binding protein 1 (265 aa).

Residues 46-80 form the WW domain; that stretch reads EGLPPSWYKVFDPSCGLPYYWNADTDLVSWLSPHD. Residue S94 is modified to Phosphoserine. Positions 94–265 are disordered; it reads SSNADAEEKL…AEASRTKQQD (172 aa). The span at 99–175 shows a compositional bias: basic and acidic residues; that stretch reads AEEKLDRSHD…DKADREEGKE (77 aa). Tandem repeats lie at residues 104–110, 111–117, 118–124, 125–131, 132–138, 139–140, 141–142, 143–144, 150–151, 152–153, 154–155, 156–157, 158–159, 160–161, and 162–163. The 5 X 7 AA approximate tandem repeats of D-R-[SG]-H-D-K-S stretch occupies residues 104 to 138; that stretch reads DRSHDKSDRGHDKSDRSHEKPDRGHDKSDRGHDKS. Positions 139–144 are 3 X 2 AA tandem repeats of [DE]-R; sequence DRDRER. The segment at 150 to 163 is 7 X 2 AA tandem repeats of [DE]-R; sequence DRERERDRERDRDR. Residues 245-255 form an important for interaction with TXNL4A region; it reads YPSPGAVLRAN. S247 bears the Phosphoserine mark.

Interacts with POU3F2/Brn-2, ATXN1, TXNL4A, HTT and AR. Interaction with ATXN1 correlates positively with the length of the polyglutamine tract. Interacts with RNA polymerase II large subunit in a phosphorylation-dependent manner. Forms a ternary complex with ATXN1 mutant and phosphorylated RNA polymerase II. Interacts (via C-terminus) with TXNL4A and CD2BP2. Interacts (via WW domain) with ATN1 and SF3B1, and may interact with additional splice factors. Interacts (via WW domain) with WBP11; Leading to reduce interaction between PQBP1 and TXNL4A. Interacts with CAPRIN1. Interacts with DDX1. Interacts with SFPQ. Interacts with KHSRP.

It localises to the nucleus. It is found in the nucleus speckle. The protein localises to the cytoplasmic granule. Functionally, intrinsically disordered protein that acts as a scaffold, and which is involved in different processes, such as pre-mRNA splicing, transcription regulation, innate immunity and neuron development. Interacts with splicing-related factors via the intrinsically disordered region and regulates alternative splicing of target pre-mRNA species. May suppress the ability of POU3F2 to transactivate the DRD1 gene in a POU3F2 dependent manner. Can activate transcription directly or via association with the transcription machinery. May be involved in ATXN1 mutant-induced cell death. The interaction with ATXN1 mutant reduces levels of phosphorylated RNA polymerase II large subunit. Involved in the assembly of cytoplasmic stress granule, possibly by participating in the transport of neuronal RNA granules. Also acts as an innate immune sensor of infection by retroviruses, by detecting the presence of reverse-transcribed DNA in the cytosol. Directly binds retroviral reverse-transcribed DNA in the cytosol and interacts with CGAS, leading to activate the cGAS-STING signaling pathway, triggering type-I interferon production. This Pongo pygmaeus (Bornean orangutan) protein is Polyglutamine-binding protein 1 (PQBP1).